A 1159-amino-acid polypeptide reads, in one-letter code: Calcium-activated potassium channel subunit alpha-1 (1159 aa).

At 1 to 24 (EPNMDALIIPVTMEVPCDSRGQRM) the chain is on the extracellular side. The chain crosses the membrane as a helical span at residues 25 to 45 (WWAFLASSMVTFFGGLFIILL). The Cytoplasmic portion of the chain corresponds to 46–116 (WRTLKYLWTV…MISAQTLTGR (71 aa)). Residues C56, C57, and C59 are each lipidated (S-palmitoyl cysteine). A helical transmembrane segment spans residues 117-137 (VLVVLVFALSIGALVIYFIDS). The Extracellular portion of the chain corresponds to 138-152 (SNPIESCQNFYKDFT). Residues 153 to 173 (LQIDMAFNVFFLLYFGLRFIA) traverse the membrane as a helical segment. Over 174–177 (ANDN) the chain is Cytoplasmic. A helical transmembrane segment spans residues 178–198 (LWFWLEVNSVVDFFTVPPVFV). The Extracellular segment spans residues 199 to 202 (SVYL). Residues 203–223 (NRSWLGLRFLRALRLIQFSEI) traverse the membrane as a helical; Voltage-sensor segment. Over 224–238 (LQFLNILKTSNSIKL) the chain is Cytoplasmic. A helical transmembrane segment spans residues 239–259 (VNLLSIFISTWLTAAGFIHLV). The Extracellular portion of the chain corresponds to 260–273 (ENSGDPWENFQNSQ). The segment at residues 274-296 (ALTYWECVYLLMVTMSTVGYGDV) is an intramembrane region (pore-forming). The Selectivity for potassium signature appears at 290 to 293 (TVGY). The Extracellular segment spans residues 297 to 305 (YAKTTPGGL). The chain crosses the membrane as a helical span at residues 306–326 (FIVFFILGGLAMFASYVPEII). Over 327 to 1159 (EIIGNRKKYG…PPIREVEDEC (833 aa)) the chain is Cytoplasmic. The 143-residue stretch at 345–487 (RKHIVVCGHI…WNWKEGDDAI (143 aa)) folds into the RCK N-terminal 1 domain. Positions 377, 400, and 402 each coordinate Mg(2+). Positions 494 to 514 (LGFIAQSCLAQGLSTMLANLF) are segment S7. Residues 551-571 (LSFPTVCELCFVKLKLLMIAI) are segment S8. The interval 615–619 (CKACH) is heme-binding motif. Residues 639 to 668 (EQPSTLSPKKKQRNGGMRNSPSSSPKLMRH) form a disordered region. A Phosphothreonine modification is found at T643. S645, S658, and S662 each carry phosphoserine. The segment at 717–737 (VLSGHVVVCIFGHVSSALIGL) is segment S9. The region spanning 719–863 (SGHVVVCIFG…MDKSSPDNSP (145 aa)) is the RCK N-terminal 2 domain. The residue at position 850 (T850) is a Phosphothreonine. A phosphoserine mark is found at S858 and S862. Residues 883–905 (TELVNDTNVQFLDQDDDDDPDTE) carry the Calcium bowl motif. The Ca(2+) site is built by Q892, D895, D898, and D900. The segment S10 stretch occupies residues 912–932 (FACGTAFAVSVLDSLMSATYF). Positions 1066-1091 (RASLSHSSHSSQSSSKKSSSVHSIPS) are enriched in low complexity. The interval 1066–1124 (RASLSHSSHSSQSSSKKSSSVHSIPSTANRQNRPKSRESRDKQTEKKWFTDEPDNAYPR) is disordered. Positions 1100-1115 (KSRESRDKQTEKKWFT) are enriched in basic and acidic residues. Phosphoserine occurs at positions 1101 and 1104.

It belongs to the potassium channel family. Calcium-activated (TC 1.A.1.3) subfamily. KCa1.1/KCNMA1 sub-subfamily. As to quaternary structure, homotetramer; which constitutes the calcium-activated potassium channel. Interacts with beta subunits KCNMB1, KCNMB2, KCNMB3 and KCNMB4. Interacts with gamma subunits LRRC26, LRRC38, LRRC52 and LRRC55. Beta and gamma subunits are accessory, and modulate its activity. Interacts with RAB11B. Phosphorylated. Phosphorylation by kinases such as PKA and/or PKG. In smooth muscles, phosphorylation affects its activity. Post-translationally, palmitoylation by ZDHHC22 and ZDHHC23 within the intracellular linker between the S0 and S1 transmembrane domains regulates localization to the plasma membrane. Depalmitoylated by LYPLA1 and LYPLAL1, leading to retard exit from the trans-Golgi network. Expressed in all vascular and smooth muscles.

The protein localises to the cell membrane. It catalyses the reaction K(+)(in) = K(+)(out). With respect to regulation, ethanol and carbon monoxide-bound heme increase channel activation. Heme inhibits channel activation. Potassium channel activated by both membrane depolarization or increase in cytosolic Ca(2+) that mediates export of K(+). It is also activated by the concentration of cytosolic Mg(2+). Its activation dampens the excitatory events that elevate the cytosolic Ca(2+) concentration and/or depolarize the cell membrane. It therefore contributes to repolarization of the membrane potential. Plays a key role in controlling excitability in a number of systems, such as regulation of the contraction of smooth muscle, the tuning of hair cells in the cochlea, regulation of transmitter release, and innate immunity. In smooth muscles, its activation by high level of Ca(2+), caused by ryanodine receptors in the sarcoplasmic reticulum, regulates the membrane potential. In cochlea cells, its number and kinetic properties partly determine the characteristic frequency of each hair cell and thereby helps to establish a tonotopic map. Kinetics of KCNMA1 channels are determined by alternative splicing, phosphorylation status and its combination with modulating beta subunits. Highly sensitive to both iberiotoxin (IbTx) and charybdotoxin (CTX). The polypeptide is Calcium-activated potassium channel subunit alpha-1 (KCNMA1) (Canis lupus familiaris (Dog)).